The primary structure comprises 185 residues: Cbp/p300-interacting transactivator 4 (185 aa).

Disordered stretches follow at residues 15–64 and 95–130; these read PRPP…VAYG and YPGR…AHAL. Over residues 103–125 the composition is skewed to pro residues; that stretch reads PGAPGGPSGPQPAPGAPAPPLQP.

It belongs to the CITED family. In terms of assembly, interacts via its C-terminal region with the CH1 domain of CREBBP and EP300. Interacts with all TFAP2/AP-2 isoforms.

Its subcellular location is the nucleus. It is found in the cytoplasm. In terms of biological role, acts as a transcriptional coactivator for TFAP2/AP-2. Enhances estrogen-dependent transactivation mediated by estrogen receptors. May function as an inhibitor of transactivation by HIF1A by disrupting HIF1A interaction with CREBBP. May be involved in regulation of gene expression during development and differentiation of blood cells, endothelial cells and mammary epithelial cells. This chain is Cbp/p300-interacting transactivator 4 (CITED4), found in Bos taurus (Bovine).